The following is a 423-amino-acid chain: Sulfate adenylyltransferase (423 aa).

Q207 and R209 together coordinate sulfate. ATP contacts are provided by residues 207 to 210 (QLRN) and 301 to 304 (GRDH). Catalysis depends on residues R209 and N210. A305 is a sulfate binding site.

It belongs to the sulfate adenylyltransferase family.

It localises to the mitosome. The catalysed reaction is sulfate + ATP + H(+) = adenosine 5'-phosphosulfate + diphosphate. It participates in sulfur metabolism; hydrogen sulfide biosynthesis; sulfite from sulfate: step 1/3. In terms of biological role, catalyzes the first intracellular reaction of sulfate assimilation, forming adenosine-5'-phosphosulfate (APS) from inorganic sulfate and ATP. This chain is Sulfate adenylyltransferase, found in Entamoeba histolytica (strain ATCC 30459 / HM-1:IMSS / ABRM).